A 293-amino-acid polypeptide reads, in one-letter code: ATP synthase subunit a (293 aa).

8 helical membrane-spanning segments follow: residues 39-59 (QVFG…VYWI), 73-93 (FVLL…DLIG), 102-122 (YFLM…LGGI), 128-148 (SLTF…IMGI), 172-192 (TLIP…SISL), 198-218 (ILGG…AFST), 224-244 (LALS…HVYF), and 245-265 (DVVV…NYWA).

It belongs to the ATPase A chain family. F-type ATPases have 2 components, CF(1) - the catalytic core - and CF(0) - the membrane proton channel. CF(1) has five subunits: alpha(3), beta(3), gamma(1), delta(1), epsilon(1). CF(0) has three main subunits: a(1), b(2) and c(9-12). The alpha and beta chains form an alternating ring which encloses part of the gamma chain. CF(1) is attached to CF(0) by a central stalk formed by the gamma and epsilon chains, while a peripheral stalk is formed by the delta and b chains.

It is found in the cell membrane. In terms of biological role, key component of the proton channel; it plays a direct role in the translocation of protons across the membrane. This Mycoplasma pneumoniae (strain ATCC 29342 / M129 / Subtype 1) (Mycoplasmoides pneumoniae) protein is ATP synthase subunit a.